The following is a 475-amino-acid chain: Gamma-aminobutyric acid receptor subunit gamma-2 (475 aa).

Positions 1-39 (MSSPNIWSTGSSVYSTPVFSQKMTLWILLLLSLYPGLTR) are cleaved as a signal peptide. Residues 41–275 (KSDDDYEDYA…FDLSRRMGYF (235 aa)) lie on the Extracellular side of the membrane. 2 N-linked (GlcNAc...) asparagine glycosylation sites follow: asparagine 52 and asparagine 129. The cysteines at positions 190 and 204 are disulfide-linked. Asparagine 247 carries an N-linked (GlcNAc...) asparagine glycan. Residues 276–296 (TIQTYIPCTLIVVLSWVSFWI) traverse the membrane as a helical segment. Topologically, residues 297-302 (NKDAVP) are cytoplasmic. Residues 303–322 (ARTSLGITTVLTMTTLSTIA) traverse the membrane as a helical segment. Over 323–334 (RKSLPKVSYVTA) the chain is Extracellular. A helical membrane pass occupies residues 335–359 (MDLFVSVCFIFVFSALVEYGTLHYF). At 360-451 (VSNRKPSKDK…IHIRIAKMDS (92 aa)) the chain is on the cytoplasmic side. Serine 382 carries the phosphoserine; by PKC modification. A helical membrane pass occupies residues 452 to 472 (YARIFFPTAFCLFNLVYWVSY). Residues 473–475 (LYL) lie on the Extracellular side of the membrane.

Belongs to the ligand-gated ion channel (TC 1.A.9) family. Gamma-aminobutyric acid receptor (TC 1.A.9.5) subfamily. GABRG2 sub-subfamily. In terms of assembly, heteropentamer, formed by a combination of alpha (GABRA1-6), beta (GABRB1-3), gamma (GABRG1-3), delta (GABRD), epsilon (GABRE), rho (GABRR1-3), pi (GABRP) and theta (GABRQ) chains, each subunit exhibiting distinct physiological and pharmacological properties. Interacts with GABARAP. Interacts with KIF21B. Identified in a complex of 720 kDa composed of LHFPL4, NLGN2, GABRA1, GABRB2, GABRG2 and GABRB3. Interacts with LHFPL4. Interacts with SHISA7; interaction leads to the regulation of GABA(A) receptor trafficking, channel deactivation kinetics and pharmacology. Post-translationally, palmitoylated by ZDHHC3/GODZ; required for the accumulation of GABA(A) receptors at the postsynaptic membrane of inhibitory GABAergic synapses. Glycosylated.

Its subcellular location is the postsynaptic cell membrane. It localises to the cell membrane. The protein resides in the cell projection. The protein localises to the dendrite. It is found in the cytoplasmic vesicle membrane. The catalysed reaction is chloride(in) = chloride(out). Its activity is regulated as follows. Allosterically activated by benzodiazepines. Activated by pentobarbital. Inhibited by the antagonist bicuculline. Inhibited by zinc ions. Potentiated by histamine. Functionally, gamma subunit of the heteropentameric ligand-gated chloride channel gated by gamma-aminobutyric acid (GABA), a major inhibitory neurotransmitter in the brain. GABA-gated chloride channels, also named GABA(A) receptors (GABAAR), consist of five subunits arranged around a central pore and contain GABA active binding site(s) located at the alpha and beta subunit interface(s). When activated by GABA, GABAARs selectively allow the flow of chloride anions across the cell membrane down their electrochemical gradient. Gamma-2/GABRG2-containing GABAARs are found at both synaptic and extrasynaptic sites. Chloride influx into the postsynaptic neuron following GABAAR opening decreases the neuron ability to generate a new action potential, thereby reducing nerve transmission. GABAARs containing alpha-1 and beta-2 or -3 subunits exhibit synaptogenic activity; the gamma-2 subunit being necessary but not sufficient to induce rapid synaptic contacts formation. Extrasynaptic gamma-2-containing receptors contribute to the tonic GABAergic inhibition. GABAARs function also as histamine receptor where histamine binds at the interface of two neighboring beta subunits and potentiates GABA response in a gamma-2 subunit-controlled manner. This is Gamma-aminobutyric acid receptor subunit gamma-2 (GABRG2) from Bos taurus (Bovine).